A 150-amino-acid polypeptide reads, in one-letter code: Interferon antagonist OPG027 (150 aa).

This sequence belongs to the orthopoxvirus OPG027 family.

Functionally, inhibits antiviral activity induced by type I interferons. Does not block signal transduction of IFN, but is important to counteract the host antiviral state induced by a pre-treatment with IFN. The polypeptide is Interferon antagonist OPG027 (OPG027) (Homo sapiens (Human)).